The primary structure comprises 136 residues: Fatty acid-binding protein homolog 5 (136 aa).

Residues R111 and 131 to 133 contribute to the a fatty acid site; that span reads RAY.

This sequence belongs to the calycin superfamily. Fatty-acid binding protein (FABP) family.

In Caenorhabditis elegans, this protein is Fatty acid-binding protein homolog 5 (lbp-5).